Reading from the N-terminus, the 743-residue chain is Putative pentatricopeptide repeat-containing protein At1g68930 (743 aa).

PPR repeat units lie at residues Glu40–Pro70, Asn71–Arg101, Asp102–Asp132, Thr138–Ser172, Tyr173–Arg203, Asn204–Lys233, Asp234–Met268, Asp269–Asp303, His304–Lys334, Asn335–Pro369, Asp370–His404, Tyr405–Arg435, Asp436–Pro470, Asp471–Pro506, and Ser507–Pro537. Residues Gly542–Lys617 are type E motif. The type E(+) motif stretch occupies residues Gly618–Ile648. Residues Asp649–Trp743 are type DYW motif.

This sequence belongs to the PPR family. PCMP-H subfamily.

This is Putative pentatricopeptide repeat-containing protein At1g68930 (PCMP-H22) from Arabidopsis thaliana (Mouse-ear cress).